A 502-amino-acid chain; its full sequence is Maturase K (502 aa).

Belongs to the intron maturase 2 family. MatK subfamily.

The protein localises to the plastid. It is found in the chloroplast. Functionally, usually encoded in the trnK tRNA gene intron. Probably assists in splicing its own and other chloroplast group II introns. The protein is Maturase K of Tilia americana (American basswood).